A 78-amino-acid chain; its full sequence is Large ribosomal subunit protein bL28 (78 aa).

Belongs to the bacterial ribosomal protein bL28 family.

The polypeptide is Large ribosomal subunit protein bL28 (Trichodesmium erythraeum (strain IMS101)).